The chain runs to 396 residues: Protein nipi-4 (396 aa).

Residues 1–20 (MELDHTPPPSVLNDNCSASY) are Extracellular-facing. Asn-15 carries an N-linked (GlcNAc...) asparagine glycan. The helical transmembrane segment at 21 to 41 (MTPYATVIAMSGLYLLAIFYF) threads the bilayer. Topologically, residues 42–396 (CKKSKKMCQP…EHHCQSVIHY (355 aa)) are cytoplasmic. Positions 81 to 368 (EVDDFQIGQT…SRLSELHHIV (288 aa)) constitute a Protein kinase domain. Residues 87–95 (IGQTADGFI) and Lys-111 contribute to the ATP site.

The protein belongs to the protein kinase superfamily. Tyr protein kinase family. As to expression, expressed in the epidermis of larvae and adults and in vulval and rectal cells.

It localises to the membrane. Pseudokinase which plays a role in resistance to fungal infection by promoting expression of antimicrobial peptides (nlp-29, nlp-31, nlp-34, cnc-1, cnc-2 and cnc-4) in the epidermis. In addition, up-regulates nlp-29 expression upon physical wounding and in response to phorbol ester PMA treatment. This is Protein nipi-4 from Caenorhabditis elegans.